Here is a 336-residue protein sequence, read N- to C-terminus: HTH-type transcriptional repressor PurR (336 aa).

One can recognise an HTH lacI-type domain in the interval 2–56 (ATIKDVAKMAGVSTTTVSHVINKTRFVAKDTEEAVLSAIKQLNYSPSAVARSLKV). Residues 4–23 (IKDVAKMAGVSTTTVSHVIN) constitute a DNA-binding region (H-T-H motif). The DNA-binding element occupies 48–56 (SAVARSLKV). Hypoxanthine-binding residues include Tyr-73, Lys-188, Thr-190, Phe-219, and Asp-273.

As to quaternary structure, homodimer.

Its pathway is purine metabolism; purine nucleotide biosynthesis [regulation]. In terms of biological role, is the main repressor of the genes involved in the de novo synthesis of purine nucleotides, regulating purB, purC, purEK, purF, purHD, purL, purMN and guaBA expression. PurR is allosterically activated to bind its cognate DNA by binding the purine corepressors, hypoxanthine or guanine, thereby effecting transcription repression. In Haemophilus influenzae (strain 86-028NP), this protein is HTH-type transcriptional repressor PurR.